The sequence spans 102 residues: Citrate lyase acyl carrier protein (102 aa).

Position 14 is an O-(phosphoribosyl dephospho-coenzyme A)serine (Ser14).

This sequence belongs to the CitD family. In terms of assembly, oligomer with a subunit composition of (alpha,beta,gamma)6.

It localises to the cytoplasm. In terms of biological role, covalent carrier of the coenzyme of citrate lyase. The chain is Citrate lyase acyl carrier protein from Streptococcus pyogenes serotype M4 (strain MGAS10750).